Consider the following 136-residue polypeptide: ATP synthase epsilon chain (136 aa).

The protein belongs to the ATPase epsilon chain family. As to quaternary structure, F-type ATPases have 2 components, CF(1) - the catalytic core - and CF(0) - the membrane proton channel. CF(1) has five subunits: alpha(3), beta(3), gamma(1), delta(1), epsilon(1). CF(0) has three main subunits: a, b and c.

The protein localises to the cell inner membrane. Its function is as follows. Produces ATP from ADP in the presence of a proton gradient across the membrane. This is ATP synthase epsilon chain from Persephonella marina (strain DSM 14350 / EX-H1).